Here is a 182-residue protein sequence, read N- to C-terminus: MNNRWILHAAFLLCFSTTALSINYKQLQLQERTNIRKCQELLEQLNGKINLTYRADFKIPMEMTEKMQKSYTAFAIQEMLQNVFLVFRNNFSSTGWNETIVVRLLDELHQQTVFLKTVLEEKQEERLTWEMSSTALHLKSYYWRVQRYLKLMKYNSYAWMVVRAEIFRNFLIIRRLTRNFQN.

The first 21 residues, 1 to 21, serve as a signal peptide directing secretion; the sequence is MNNRWILHAAFLLCFSTTALS. Tyr24 carries the phosphotyrosine modification. 3 N-linked (GlcNAc...) asparagine glycosylation sites follow: Asn50, Asn90, and Asn97.

It belongs to the alpha/beta interferon family. As to quaternary structure, monomer. In terms of processing, this beta interferon does not have a disulfide bond.

Its subcellular location is the secreted. Type I interferon cytokine that plays a key role in the innate immune response to infection, developing tumors and other inflammatory stimuli. Signals via binding to high-affinity (IFNAR2) and low-affinity (IFNAR1) heterodimeric receptor, activating the canonical Jak-STAT signaling pathway resulting in transcriptional activation or repression of interferon-regulated genes that encode the effectors of the interferon response, such as antiviral proteins, regulators of cell proliferation and differentiation, and immunoregulatory proteins. Signals mostly via binding to a IFNAR1-IFNAR2 heterodimeric receptor, but can also function with IFNAR1 alone and independently of Jak-STAT pathways. Elicits a wide variety of responses, including antiviral and antibacterial activities, and can regulate the development of B-cells, myelopoiesis and lipopolysaccharide (LPS)-inducible production of tumor necrosis factor. Plays a role in neuronal homeostasis by regulating dopamine turnover and protecting dopaminergic neurons: acts by promoting neuronal autophagy and alpha-synuclein clearance, thereby preventing dopaminergic neuron loss. IFNB1 is more potent than interferon-alpha (IFN-alpha) in inducing the apoptotic and antiproliferative pathways required for control of tumor cell growth. The chain is Interferon beta from Mus musculus (Mouse).